The primary structure comprises 427 residues: O-methyltransferase PaMT (427 aa).

Positions 230 and 281 each coordinate S-adenosyl-L-methionine. His326 functions as the Proton acceptor in the catalytic mechanism.

It belongs to the class I-like SAM-binding methyltransferase superfamily. Cation-independent O-methyltransferase family. COMT subfamily. S-adenosyl-L-methionine is required as a cofactor.

It functions in the pathway mycotoxin biosynthesis. O-methyltransferase; part of the 2 gene clusters that mediate the biosynthesis of fusicoccins, diterpene glucosides that display phytohormone-like activity and function as potent activators of plasma membrane H(+)-ATPases in plants by modifying 14-3-3 proteins and cause the plant disease constriction canker. The first step in the pathway is performed by the fusicoccadiene synthase PaFS that possesses both prenyl transferase and terpene cyclase activity, converting isopentenyl diphosphate and dimethylallyl diphosphate into geranylgeranyl diphosphate (GGDP) and successively converting GGDP into fusicocca-2,10(14)-diene, a precursor for fusicoccin H. The second step is the oxidation at the C-8 position by the cytochrome P450 monooxygenase PaP450-2 to yield fusicocca-2,10(14)-diene-8-beta-ol. The cytochrome P450 monooxygenase PaP450-1 then catalyzes the hydroxylation at the C-16 position to produce fusicocca-2,10(14)-diene-8-beta,16-diol. The dioxygenase fc-dox then catalyzes the 16-oxydation of fusicocca-2,10(14)-diene-8-beta,16-diol to yield an aldehyde (8-beta-hydroxyfusicocca-1,10(14)-dien-16-al). The short-chain dehydrogenase/reductase fc-sdr catalyzes the reduction of the aldehyde to yield fusicocca-1,10(14)-diene-8-beta,16-diol. The next step is the hydroxylation at C-9 performed by the cytochrome P450 monooxygenase PaP450-3 that leads to fusicoccin H aglycon which is glycosylated to fusicoccin H by the O-glycosyltransferase PaGT. Hydroxylation at C-12 by the cytochrome P450 monooxygenase PaP450-4 leads then to the production of fusicoccin Q and is followed by methylation by the O-methyltransferase PaMT to yield fusicoccin P. Fusicoccin P is further converted to fusicoccin J via prenylation by the O-glucose prenyltransferase PaPT. Cytochrome P450 monooxygenase PaP450-5 then performs hydroxylation at C-19 to yield dideacetyl-fusicoccin A which is acetylated to 3'-O-deacetyl-fusicoccin A by the O-acetyltransferase PaAT-2. Finally, a another acetylation by the O-acetyltransferase PaAT-1 yields fusicoccin A. The chain is O-methyltransferase PaMT from Phomopsis amygdali (Fusicoccum amygdali).